The primary structure comprises 176 residues: Translation initiation factor IF-3 (176 aa).

Belongs to the IF-3 family. Monomer.

The protein localises to the cytoplasm. IF-3 binds to the 30S ribosomal subunit and shifts the equilibrium between 70S ribosomes and their 50S and 30S subunits in favor of the free subunits, thus enhancing the availability of 30S subunits on which protein synthesis initiation begins. The polypeptide is Translation initiation factor IF-3 (Streptococcus pyogenes serotype M18 (strain MGAS8232)).